Here is a 729-residue protein sequence, read N- to C-terminus: 1,4-alpha-glucan branching enzyme GlgB (729 aa).

The Nucleophile role is filled by D409. Residue E462 is the Proton donor of the active site.

This sequence belongs to the glycosyl hydrolase 13 family. GlgB subfamily. In terms of assembly, monomer.

It carries out the reaction Transfers a segment of a (1-&gt;4)-alpha-D-glucan chain to a primary hydroxy group in a similar glucan chain.. It participates in glycan biosynthesis; glycogen biosynthesis. Functionally, catalyzes the formation of the alpha-1,6-glucosidic linkages in glycogen by scission of a 1,4-alpha-linked oligosaccharide from growing alpha-1,4-glucan chains and the subsequent attachment of the oligosaccharide to the alpha-1,6 position. The sequence is that of 1,4-alpha-glucan branching enzyme GlgB from Saccharophagus degradans (strain 2-40 / ATCC 43961 / DSM 17024).